Reading from the N-terminus, the 225-residue chain is Chlorosome protein J (225 aa).

A 2Fe-2S ferredoxin-type domain is found at 1–95; it reads MIIYINDKPC…TIRVLTRAEK (95 aa). Positions 33, 39, 42, and 77 each coordinate [2Fe-2S] cluster.

[2Fe-2S] cluster serves as cofactor.

It is found in the chlorosome. Its function is as follows. Could play a direct role in the oxidation or reduction of the quenching species formed in the chlorosome. The chain is Chlorosome protein J (csmJ) from Chlorobaculum tepidum (strain ATCC 49652 / DSM 12025 / NBRC 103806 / TLS) (Chlorobium tepidum).